The sequence spans 69 residues: Small, acid-soluble spore protein A (69 aa).

Belongs to the alpha/beta-type SASP family.

In terms of biological role, SASP are bound to spore DNA. They are double-stranded DNA-binding proteins that cause DNA to change to an a-like conformation. They protect the DNA backbone from chemical and enzymatic cleavage and are thus involved in dormant spore's high resistance to UV light. The protein is Small, acid-soluble spore protein A (sspA) of Bacillus subtilis (strain 168).